The sequence spans 419 residues: Histidine--tRNA ligase (419 aa).

The protein belongs to the class-II aminoacyl-tRNA synthetase family. Homodimer.

The protein localises to the cytoplasm. It catalyses the reaction tRNA(His) + L-histidine + ATP = L-histidyl-tRNA(His) + AMP + diphosphate + H(+). The protein is Histidine--tRNA ligase of Desulfatibacillum aliphaticivorans.